The following is a 1202-amino-acid chain: Calmodulin-binding transcription activator 2 (1202 aa).

Positions 30 to 155 (RCPLLPPERL…YLNVPALEDC (126 aa)) form a DNA-binding region, CG-1. The Nuclear localization signal signature appears at 79–86 (RKKVKYRK). 3 disordered regions span residues 263–322 (SIPH…SRGG), 361–409 (GTEP…AHTP), and 421–491 (PQAA…LFGG). A compositionally biased stretch (pro residues) spans 270–283 (PEPPPLIAPLPPEL). Composition is skewed to low complexity over residues 289-299 (SPSSSSSSSSS) and 313-322 (TSRGGSSRGG). Composition is skewed to pro residues over residues 365 to 374 (SAPPAPPSPA) and 460 to 476 (PPIPSPPPSPPPSPAPL). The region spanning 537–615 (DFSPEWSYPE…LSASVLFEYR (79 aa)) is the IPT/TIG domain. 3 ANK repeats span residues 712–745 (MSLLHLAAAQGYARLIETLSQWRSVETGSLDLEQ), 757–787 (CTPLMWACALGHLEAAVLLFRWNRQALSIPD), and 791–821 (RLPLSVAHSRGHVRLARCLEELQRQEPSVEP). Disordered regions lie at residues 817-874 (PSVE…ASEM) and 906-929 (PLSSLPALPPASDDGAAPEDADSP). Composition is skewed to low complexity over residues 826 to 846 (SPPSSSPDTGLSSVSSPSELS) and 906 to 917 (PLSSLPALPPAS). 2 IQ domains span residues 1049-1078 (YEAARVIQTAFRKYKGRRLKEQQEVAAAVI) and 1102-1131 (TQAAILIQSKFRSYYEQKRFQQSRRAAVLI).

The protein belongs to the CAMTA family. In terms of assembly, may interact with calmodulin. As to expression, detected in brain. Expressed at constant levels throughout the cell cycle in neuroblastoma cell lines.

It localises to the nucleus. Its function is as follows. Transcription activator. May act as tumor suppressor. The sequence is that of Calmodulin-binding transcription activator 2 (CAMTA2) from Homo sapiens (Human).